We begin with the raw amino-acid sequence, 1226 residues long: Polyamine-transporting ATPase 13A3 (1226 aa).

Residues Met1–Lys28 are Cytoplasmic-facing. Residues Leu29–Trp49 lie within the membrane without spanning it. The Cytoplasmic portion of the chain corresponds to Met50–Lys205. Ser98 is subject to Phosphoserine. A helical membrane pass occupies residues Leu206–Trp226. Over Ser227 to Tyr232 the chain is Lumenal. Residues Tyr233–Ile253 form a helical membrane-spanning segment. Over Arg254–Asp409 the chain is Cytoplasmic. Residues Ala410–Ile430 form a helical membrane-spanning segment. At Asn431–Asp448 the chain is on the lumenal side. Residues Ile449 to Ala469 form a helical membrane-spanning segment. The Cytoplasmic portion of the chain corresponds to Gln470–Lys940. Asp498 (4-aspartylphosphate intermediate) is an active-site residue. Asp498 and Thr500 together coordinate Mg(2+). Residues Asp498–Thr500, Phe628, Arg684, and Asp750 contribute to the ATP site. Ser817 bears the Phosphoserine mark. Asp883 serves as a coordination point for Mg(2+). Residue Asp883–Asp887 participates in ATP binding. The helical transmembrane segment at Phe941–Ser961 threads the bilayer. Asn962 is a topological domain (lumenal). The chain crosses the membrane as a helical span at residues Leu963–Met983. Residues Ser984–Ser999 are Cytoplasmic-facing. Residues Gly1000–Phe1020 traverse the membrane as a helical segment. At Gln1021–Asn1073 the chain is on the lumenal side. Residues Thr1074–Gly1094 form a helical membrane-spanning segment. The Cytoplasmic segment spans residues Lys1095–Tyr1105. The helical transmembrane segment at Phe1106–Val1126 threads the bilayer. The Lumenal portion of the chain corresponds to Ala1127–Arg1143. A helical transmembrane segment spans residues Val1144–Val1164. Residues Asp1165–Thr1226 lie on the Cytoplasmic side of the membrane.

The protein belongs to the cation transport ATPase (P-type) (TC 3.A.3) family. Type V subfamily.

Its subcellular location is the recycling endosome membrane. The protein resides in the early endosome membrane. It localises to the late endosome membrane. The enzyme catalyses putrescine(out) + ATP + H2O = putrescine(in) + ADP + phosphate + H(+). Functionally, ATP-driven pump involved in endocytosis-dependent polyamine transport. Uses ATP as an energy source to transfer polyamine precursor putrescine from the endosomal compartment to the cytosol. The chain is Polyamine-transporting ATPase 13A3 (ATP13A3) from Macaca fascicularis (Crab-eating macaque).